The primary structure comprises 364 residues: Medium-wave-sensitive opsin 1 (364 aa).

The Extracellular segment spans residues 1-52; sequence MAQRWGPHALSGVQAQDAYEDSTQASLFTYTNSNNTRGPFEGPNYHIAPRWV. A required for 11-cis-retinal regeneration region spans residues 17 to 43; sequence DAYEDSTQASLFTYTNSNNTRGPFEGP. An N-linked (GlcNAc...) asparagine glycan is attached at asparagine 34. The helical transmembrane segment at 53–77 threads the bilayer; the sequence is YHLTSAWMTIVVIASIFTNGLVLVA. Over 78–89 the chain is Cytoplasmic; that stretch reads TMRFKKLRHPLN. A helical transmembrane segment spans residues 90 to 115; it reads WILVNLAVADLAETVIASTISVVNQV. At 116–129 the chain is on the extracellular side; it reads YGYFVLGHPLCVVE. Cysteine 126 and cysteine 203 are oxidised to a cystine. The helical transmembrane segment at 130-149 threads the bilayer; that stretch reads GYTVSLCGITGLWSLAIISW. The Cytoplasmic portion of the chain corresponds to 150–168; it reads ERWLVVCKPFGNVRFDAKL. The helical transmembrane segment at 169 to 192 threads the bilayer; the sequence is AIVGIVFSWVWSAVWTAPPIFGWS. Topologically, residues 193 to 218 are extracellular; it reads RYWPYGLKTSCGPDVFSGTSYPGVQS. Residues 219 to 246 traverse the membrane as a helical segment; it reads YMMVLMVTCCITPLSIIVLCYLHVWLAI. The Cytoplasmic segment spans residues 247–268; sequence RAVAKQQKESESTQKAEKEVTR. The chain crosses the membrane as a helical span at residues 269–292; the sequence is MVVVMVLAYCLCWGPYAFFACFAT. Over 293–300 the chain is Extracellular; it reads ANPGYSFH. Residues 301–325 form a helical membrane-spanning segment; sequence PLVAALPAYFAKSATIYNPIIYVFM. Lysine 312 carries the N6-(retinylidene)lysine modification. At 326–364 the chain is on the cytoplasmic side; sequence NRQFRNCILQLFGKKVEDSSELSSTSRTEASSVSSVSPA.

Belongs to the G-protein coupled receptor 1 family. Opsin subfamily. As to quaternary structure, monomer. Homodimer. Homotetramer. Post-translationally, O-glycosylated. In terms of processing, phosphorylated on some or all of the serine and threonine residues present in the C-terminal region. In terms of tissue distribution, expressed in cone photoreceptor cells.

The protein resides in the membrane. In terms of biological role, visual pigments are the light-absorbing molecules that mediate vision. They consist of an apoprotein, opsin, covalently linked to cis-retinal. May increase spectral sensitivity in dim light. This is Medium-wave-sensitive opsin 1 (OPN1MW) from Cavia porcellus (Guinea pig).